Consider the following 339-residue polypeptide: Serine racemase (339 aa).

Position 13 (glutamate 13) interacts with Mg(2+). ATP-binding residues include serine 31, serine 32, isoleucine 33, lysine 51, and threonine 52. Residue lysine 56 is the Proton acceptor of the active site. Residue lysine 56 is modified to N6-(pyridoxal phosphate)lysine. Proline 69 is a binding site for Ca(2+). Phosphothreonine is present on threonine 71. Residue threonine 81 coordinates Ca(2+). Serine 84 (proton acceptor) is an active-site residue. Position 86 (asparagine 86) interacts with pyridoxal 5'-phosphate. Glutamine 89 serves as a coordination point for ATP. Cysteine 113 carries the post-translational modification S-nitrosocysteine. Tyrosine 121 contributes to the ATP binding site. Residue asparagine 154 coordinates pyridoxal 5'-phosphate. A Mg(2+)-binding site is contributed by aspartate 178. Pyridoxal 5'-phosphate is bound by residues glycine 185, glycine 186, glycine 187, glycine 188, and methionine 189. Mg(2+)-binding residues include glutamate 210, alanine 214, aspartate 216, and asparagine 247. Ca(2+) contacts are provided by glutamate 210, alanine 214, aspartate 216, and asparagine 247. Mn(2+) is bound by residues glutamate 210, alanine 214, and aspartate 216. ATP is bound at residue lysine 279. Serine 313 lines the pyridoxal 5'-phosphate pocket. Residue asparagine 316 coordinates ATP.

This sequence belongs to the serine/threonine dehydratase family. Homodimer. It depends on Mg(2+) as a cofactor. Mn(2+) serves as cofactor. Ca(2+) is required as a cofactor. Requires pyridoxal 5'-phosphate as cofactor. S-nitrosylated, leading to decrease the enzyme activity. In terms of tissue distribution, expressed in the hippocampus (at protein level). Expressed in the small intestine.

It carries out the reaction L-serine = D-serine. The enzyme catalyses D-serine = pyruvate + NH4(+). It catalyses the reaction L-serine = pyruvate + NH4(+). Its activity is regulated as follows. Allosterically activated by magnesium, and possibly also other divalent metal cations. Allosterically activated by ATP, ADP or GTP. Its function is as follows. Catalyzes the synthesis of D-serine from L-serine. D-serine is a key coagonist with glutamate at NMDA receptors. Has dehydratase activity towards both L-serine and D-serine. The chain is Serine racemase (Srr) from Mus musculus (Mouse).